We begin with the raw amino-acid sequence, 563 residues long: Arginine--tRNA ligase (563 aa).

The 'HIGH' region motif lies at 121 to 131; sequence PNIAKPFSIGH.

It belongs to the class-I aminoacyl-tRNA synthetase family. Monomer.

The protein resides in the cytoplasm. The catalysed reaction is tRNA(Arg) + L-arginine + ATP = L-arginyl-tRNA(Arg) + AMP + diphosphate. The chain is Arginine--tRNA ligase from Streptococcus equi subsp. equi (strain 4047).